The sequence spans 242 residues: Synaptonemal complex central element protein 1-like (242 aa).

The disordered stretch occupies residues 1–24; that stretch reads MAGKLKPLNVEAPEATEEAEGQAK. A coiled-coil region spans residues 44 to 181; it reads LEPQIEDLIS…LREVERRLHS (138 aa). The interval 206–242 is disordered; sequence VRSAPEVGAGEGEAGPELPRARDEEDPEPPVAAPDAL.

Belongs to the SYCE family.

In terms of biological role, may be involved in meiosis. The protein is Synaptonemal complex central element protein 1-like (SYCE1L) of Homo sapiens (Human).